Consider the following 154-residue polypeptide: D-aminoacyl-tRNA deacylase (154 aa).

The short motif at 137 to 138 (GP) is the Gly-cisPro motif, important for rejection of L-amino acids element.

Belongs to the DTD family. Homodimer.

The protein resides in the cytoplasm. It carries out the reaction glycyl-tRNA(Ala) + H2O = tRNA(Ala) + glycine + H(+). The enzyme catalyses a D-aminoacyl-tRNA + H2O = a tRNA + a D-alpha-amino acid + H(+). An aminoacyl-tRNA editing enzyme that deacylates mischarged D-aminoacyl-tRNAs. Also deacylates mischarged glycyl-tRNA(Ala), protecting cells against glycine mischarging by AlaRS. Acts via tRNA-based rather than protein-based catalysis; rejects L-amino acids rather than detecting D-amino acids in the active site. By recycling D-aminoacyl-tRNA to D-amino acids and free tRNA molecules, this enzyme counteracts the toxicity associated with the formation of D-aminoacyl-tRNA entities in vivo and helps enforce protein L-homochirality. This is D-aminoacyl-tRNA deacylase from Thermomicrobium roseum (strain ATCC 27502 / DSM 5159 / P-2).